The following is a 91-amino-acid chain: Small ubiquitin-related modifier (91 aa).

The Ubiquitin-like domain maps to 13–91; that stretch reads EYIKIKVVGQ…EVYQEQLGGF (79 aa). Residue glycine 90 forms a Glycyl lysine isopeptide (Gly-Lys) (interchain with K-? in acceptor proteins) linkage. Phenylalanine 91 is a propeptide.

It belongs to the ubiquitin family. SUMO subfamily. Covalently attached to tbx-2. Covalently attached to lin-1. Covalently attached to lin-11. Covalently attached to sop-2. Covalently attached to bet-1. Post-translationally, cleavage of precursor form by ulp-1 is necessary for function.

It localises to the cytoplasm. The protein localises to the nucleus. It is found in the cytoskeleton. The protein resides in the spindle. Its subcellular location is the chromosome. It localises to the microtubule organizing center. The protein localises to the centrosome. In terms of biological role, ubiquitin-like protein which can be covalently attached to target lysines as a monomer. Does not seem to be involved in protein degradation and may function as an antagonist of ubiquitin in the degradation process. Plays a role in a number of cellular processes such as nuclear transport, DNA replication and repair, mitosis and signal transduction. Covalent attachment to its substrates requires prior activation by the E1 complex aos-1-uba-2 and linkage to the E2 enzyme ubc-9, and can be promoted by an E3 ligase such as gei-17. Required for embryonic development, fertility, vulval morphogenesis and inhibition of vulval cell fates. Probably by sumoylating bet-1, prevents muscle myosin depletion in aging adults probably by preventing myoblast growth factor receptor egl-15 overexpression. Plays a role in the attenuation of the let-60/ras pathway. Plays a role in male tail tip morphogenesis. Plays a role in the mitochondrial stress response with its covalent attachment to transcription factors dve-1 and afts-1 negatively regulating the mitochondrial unfolded protein response. The protein is Small ubiquitin-related modifier of Caenorhabditis elegans.